We begin with the raw amino-acid sequence, 596 residues long: Signal peptide peptidase-like 2B (596 aa).

Residues 1-21 form the signal peptide; sequence MAARWAQFLLFSLLSLPQVYC. At 22–170 the chain is on the lumenal side; it reads EYGMVHVLSE…APNEPVLDYN (149 aa). The PA domain maps to 53–147; that stretch reads HDLGKASLLQ…LLSYSDMLDI (95 aa). N93 is a glycosylation site (N-linked (GlcNAc...) asparagine). The chain crosses the membrane as a helical span at residues 171-191; the sequence is MVIIFVMAVGTVAIGGYWAGS. Residues 192–219 lie on the Cytoplasmic side of the membrane; it reads RDVKERYMKHKRDDGAEKHEDETVDVTP. The helical transmembrane segment at 220-240 threads the bilayer; the sequence is IMICVFVVMCCSMLVLLYFFY. At 241–242 the chain is on the lumenal side; that stretch reads DH. Residues 243-263 form a helical membrane-spanning segment; sequence LVYVIIGIFCLAASIGLYSCL. The Cytoplasmic portion of the chain corresponds to 264-289; sequence SPFVRRFPLGKCRIPDNNLPYFHKRP. A helical transmembrane segment spans residues 290 to 310; sequence QVRILLLAVFCISVSVVWGVF. Residues 311–315 lie on the Lumenal side of the membrane; sequence RNEDQ. A helical membrane pass occupies residues 316–336; it reads WAWVLQDALGIAFCLYMLKTI. Topologically, residues 337 to 344 are cytoplasmic; that stretch reads RLPTFKGC. A helical transmembrane segment spans residues 345-365; sequence TLLLLVLFVYDVFFVFITPFL. D355 is an active-site residue. The Lumenal portion of the chain corresponds to 366 to 408; it reads TKTGESIMVEVAAGPSDSATHEKLPMVLKVPRLNSSPLALCDR. A helical transmembrane segment spans residues 409-429; the sequence is PFSLLGFGDILVPGLLVAYCH. Residue D417 is part of the active site. The Cytoplasmic segment spans residues 430–441; sequence RFDIQVQSSRVY. Residues 442 to 462 form a helical membrane-spanning segment; it reads FVACTIAYGIGLLVTFVALAL. Residues 463-466 are Lumenal-facing; the sequence is MQMG. Residues 467–487 traverse the membrane as a helical segment; it reads QPALLYLVPCTLITSFSVALW. Positions 468-470 match the PAL motif; it reads PAL. Topologically, residues 488–596 are cytoplasmic; it reads RKELAMFWTG…SLNLEQKQLE (109 aa). The interval 543 to 596 is disordered; sequence KELHSPTLAAEEPADNDTKTEQSEVSIAQSEEAAGHNKDDLESKSLNLEQKQLE. Positions 575–585 are enriched in basic and acidic residues; the sequence is AAGHNKDDLES. Residues 586 to 596 show a composition bias toward polar residues; sequence KSLNLEQKQLE.

This sequence belongs to the peptidase A22B family.

The protein localises to the cell membrane. The protein resides in the golgi apparatus membrane. It is found in the lysosome membrane. It localises to the endosome membrane. Its subcellular location is the membrane. Functionally, intramembrane-cleaving aspartic protease (I-CLiP) that cleaves type II membrane signal peptides in the hydrophobic plane of the membrane. The protein is Signal peptide peptidase-like 2B of Gallus gallus (Chicken).